Here is a 425-residue protein sequence, read N- to C-terminus: Lysosome-associated membrane glycoprotein 2 (425 aa).

The first 27 residues, methionine 1 to alanine 27, serve as a signal peptide directing secretion. Positions valine 28–aspartate 192 are first lumenal domain. The Lumenal segment spans residues valine 28–asparagine 389. Residues asparagine 37, asparagine 56, asparagine 62, asparagine 74, asparagine 100, asparagine 105, asparagine 120, asparagine 163, asparagine 170, asparagine 179, asparagine 206, asparagine 232, asparagine 239, asparagine 252, asparagine 276, asparagine 287, asparagine 298, asparagine 312, asparagine 320, and asparagine 331 are each glycosylated (N-linked (GlcNAc...) asparagine). A disulfide bridge links cysteine 40 with cysteine 78. Residues cysteine 153 and cysteine 189 are joined by a disulfide bond. The interval threonine 193–glycine 238 is hinge. A second lumenal domain region spans residues asparagine 239–phenylalanine 390. Cysteine 242 and cysteine 274 are oxidised to a cystine. Cysteine 345 and cysteine 382 form a disulfide bridge. Residues phenylalanine 390 to glycine 414 form a helical membrane-spanning segment. At arginine 415–valine 425 the chain is on the cytoplasmic side. The segment at arginine 416–arginine 419 is important for binding and subsequent lysosomal degradation of target proteins.

Belongs to the LAMP family. As to quaternary structure, monomer. Forms large homooligomers. Extensively N-glycosylated. Contains a minor proportion of O-linked glycans.

Its subcellular location is the lysosome membrane. The protein resides in the endosome membrane. The protein localises to the cell membrane. It localises to the cytoplasmic vesicle. It is found in the autophagosome membrane. In terms of biological role, lysosomal membrane glycoprotein which plays an important role in lysosome biogenesis, lysosomal pH regulation and autophagy. Plays an important role in chaperone-mediated autophagy, a process that mediates lysosomal degradation of proteins in response to various stresses and as part of the normal turnover of proteins with a long biological half-live. In the chaperone-mediated autophagy, acts downstream of chaperones, such as HSPA8/HSC70, which recognize and bind substrate proteins and mediate their recruitment to lysosomes, where target proteins bind LAMP2. Plays a role in lysosomal protein degradation in response to starvation. Required for the fusion of autophagosomes with lysosomes during autophagy. This is Lysosome-associated membrane glycoprotein 2 (LAMP2) from Gallus gallus (Chicken).